We begin with the raw amino-acid sequence, 157 residues long: UPF0212 protein rrnAC1165 (157 aa).

Residues 105–157 (VLEIEEIPEESDETTEDESSSAESEADADDPPSDQSADESDDVLPEFEELIDE) are disordered. Residues 106–157 (LEIEEIPEESDETTEDESSSAESEADADDPPSDQSADESDDVLPEFEELIDE) are compositionally biased toward acidic residues.

The protein belongs to the UPF0212 family.

This chain is UPF0212 protein rrnAC1165, found in Haloarcula marismortui (strain ATCC 43049 / DSM 3752 / JCM 8966 / VKM B-1809) (Halobacterium marismortui).